Reading from the N-terminus, the 321-residue chain is MSKPIQMERGVKYRDADKMALIPVKTIVTEREELLRKPEWMKIKLPADSSKIQGIKAAMRKNGLHSVCEEASCPNLAECFNHGTATFMILGAICTRRCPFCDVAHGRPNAPDPQEPIKLAQTIKDMGLRYVVITSVDRDDLRDGGAQHFADCITAIREKNPNIRIETLVPDFRGRMDKALEILTDTPPDVFNHNLENVPRVYRQVRPGANYQWSLTLLERFKQAHPNIPTKSGLMVGLGETNEEIIDVMRDLRKHGVTMLTLGQYLQPSRHHLPVQRYVSPDEFEYMKEQALAMGFTHAACGPFVRSSYHADLQAQGIEVK.

The [4Fe-4S] cluster site is built by Cys-68, Cys-73, Cys-79, Cys-94, Cys-98, Cys-101, and Ser-308. The region spanning 80–297 (FNHGTATFMI…KEQALAMGFT (218 aa)) is the Radical SAM core domain.

Belongs to the radical SAM superfamily. Lipoyl synthase family. It depends on [4Fe-4S] cluster as a cofactor.

It localises to the cytoplasm. The enzyme catalyses [[Fe-S] cluster scaffold protein carrying a second [4Fe-4S](2+) cluster] + N(6)-octanoyl-L-lysyl-[protein] + 2 oxidized [2Fe-2S]-[ferredoxin] + 2 S-adenosyl-L-methionine + 4 H(+) = [[Fe-S] cluster scaffold protein] + N(6)-[(R)-dihydrolipoyl]-L-lysyl-[protein] + 4 Fe(3+) + 2 hydrogen sulfide + 2 5'-deoxyadenosine + 2 L-methionine + 2 reduced [2Fe-2S]-[ferredoxin]. It participates in protein modification; protein lipoylation via endogenous pathway; protein N(6)-(lipoyl)lysine from octanoyl-[acyl-carrier-protein]: step 2/2. Its function is as follows. Catalyzes the radical-mediated insertion of two sulfur atoms into the C-6 and C-8 positions of the octanoyl moiety bound to the lipoyl domains of lipoate-dependent enzymes, thereby converting the octanoylated domains into lipoylated derivatives. The protein is Lipoyl synthase of Proteus mirabilis (strain HI4320).